A 427-amino-acid polypeptide reads, in one-letter code: Trigger factor (427 aa).

A PPIase FKBP-type domain is found at 163–248; sequence GNIAIIDFKG…VKGIKVKELP (86 aa).

Belongs to the FKBP-type PPIase family. Tig subfamily.

It is found in the cytoplasm. It carries out the reaction [protein]-peptidylproline (omega=180) = [protein]-peptidylproline (omega=0). In terms of biological role, involved in protein export. Acts as a chaperone by maintaining the newly synthesized protein in an open conformation. Functions as a peptidyl-prolyl cis-trans isomerase. The protein is Trigger factor of Clostridium botulinum (strain Alaska E43 / Type E3).